Consider the following 401-residue polypeptide: Imidazolonepropionase (401 aa).

Fe(3+)-binding residues include His-66 and His-68. Residues His-66 and His-68 each contribute to the Zn(2+) site. The 4-imidazolone-5-propanoate site is built by Arg-75, Tyr-138, and His-171. Tyr-138 lines the N-formimidoyl-L-glutamate pocket. His-236 provides a ligand contact to Fe(3+). A Zn(2+)-binding site is contributed by His-236. Residue Gln-239 participates in 4-imidazolone-5-propanoate binding. Residue Asp-311 participates in Fe(3+) binding. Asp-311 provides a ligand contact to Zn(2+). The N-formimidoyl-L-glutamate site is built by Asn-313 and Gly-315. Residue Thr-316 participates in 4-imidazolone-5-propanoate binding.

The protein belongs to the metallo-dependent hydrolases superfamily. HutI family. Zn(2+) is required as a cofactor. The cofactor is Fe(3+).

The protein localises to the cytoplasm. It catalyses the reaction 4-imidazolone-5-propanoate + H2O = N-formimidoyl-L-glutamate. It functions in the pathway amino-acid degradation; L-histidine degradation into L-glutamate; N-formimidoyl-L-glutamate from L-histidine: step 3/3. In terms of biological role, catalyzes the hydrolytic cleavage of the carbon-nitrogen bond in imidazolone-5-propanoate to yield N-formimidoyl-L-glutamate. It is the third step in the universal histidine degradation pathway. The sequence is that of Imidazolonepropionase from Acinetobacter baumannii (strain ATCC 17978 / DSM 105126 / CIP 53.77 / LMG 1025 / NCDC KC755 / 5377).